Consider the following 569-residue polypeptide: Acyl-CoA-binding domain-containing protein 5 (569 aa).

Positions 1 to 31 (MELFYELLLTAAASLLVAFLLARLLASAATA) are cleaved as a signal peptide. The 92-residue stretch at 415–506 (IEKRFGVAAA…LSEAIPGWMG (92 aa)) folds into the ACB domain. The an acyl-CoA site is built by K474 and Y493. Residue N508 is glycosylated (N-linked (GlcNAc...) asparagine). Polar residues-rich tracts occupy residues 533-544 (INQHDSQGNEDN) and 552-569 (LTSS…IPAE). Residues 533 to 569 (INQHDSQGNEDNTGMYEGHLTSSPNPEKGQSSDIPAE) form a disordered region.

Belongs to the ACBP family. As to expression, highly expressed in seeds and leaves. Expressed at low levels in roots.

Its subcellular location is the endoplasmic reticulum. Its function is as follows. Binds medium- and long-chain acyl-CoA esters with high affinity. Can interact in vitro with palmitoyl-CoA and linolenoyl-CoA. Binds phosphatidic acid (PA) and phosphatidylcholine (PC) in vitro. May play a role in the biosynthesis of phospholipids. The chain is Acyl-CoA-binding domain-containing protein 5 from Oryza sativa subsp. japonica (Rice).